Consider the following 195-residue polypeptide: uncharacterized protein (195 aa).

This is an uncharacterized protein from Schizosaccharomyces pombe (strain 972 / ATCC 24843) (Fission yeast).